Consider the following 453-residue polypeptide: Ankyrin repeat and SOCS box protein 16 (453 aa).

ANK repeat units lie at residues 56-85 (CRDPAVHNALFSGDLQQLQILFQDEDAANM), 110-139 (KQTAPLTIAVARGYTDCARHLILQGAELDA), 142-171 (GGRAALHEACAQAHPDCVRLLLTFGAKANV), 175-204 (EGMTPLHLCTSPESLQCAKLLLEAGASVNV), 209-238 (SEVTPLHVAAARGLEQHVALYLQNGADVAL), 242-279 (QGETALNAACAGAEGPGSSRQHEAAARQLLEAGADPQA), and 283-312 (KRHTPLHNACANGCGGLAELLLRHGASPGV). Positions 397–453 (FYSSALSMENQPRQLQHLARLAVRAQLGSHCRQAAAQLPLPPLLRDYLLLGVEGRIQ) constitute an SOCS box domain.

Belongs to the ankyrin SOCS box (ASB) family.

The protein operates within protein modification; protein ubiquitination. Functionally, may be a substrate-recognition component of a SCF-like ECS (Elongin-Cullin-SOCS-box protein) E3 ubiquitin-protein ligase complex which mediates the ubiquitination and subsequent proteasomal degradation of target proteins. This chain is Ankyrin repeat and SOCS box protein 16 (Asb16), found in Mus musculus (Mouse).